A 427-amino-acid polypeptide reads, in one-letter code: Isocitrate lyase (427 aa).

89–91 (SGW) provides a ligand contact to substrate. D150 serves as a coordination point for Mg(2+). The active-site Proton acceptor is C188. Substrate-binding positions include 189–190 (GH), R225, 310–314 (NCSPS), and T344.

The protein belongs to the isocitrate lyase/PEP mutase superfamily. Isocitrate lyase family. In terms of assembly, homotetramer. Requires Mg(2+) as cofactor.

The catalysed reaction is D-threo-isocitrate = glyoxylate + succinate. It participates in carbohydrate metabolism; glyoxylate cycle; (S)-malate from isocitrate: step 1/2. Involved in the metabolic adaptation in response to environmental changes. Catalyzes the reversible formation of succinate and glyoxylate from isocitrate, a key step of the glyoxylate cycle, which operates as an anaplerotic route for replenishing the tricarboxylic acid cycle during growth on fatty acid substrates. In Halalkalibacterium halodurans (strain ATCC BAA-125 / DSM 18197 / FERM 7344 / JCM 9153 / C-125) (Bacillus halodurans), this protein is Isocitrate lyase (aceA).